The chain runs to 68 residues: UPF0434 protein BMA10229_A1047 (68 aa).

It belongs to the UPF0434 family.

This Burkholderia mallei (strain NCTC 10229) protein is UPF0434 protein BMA10229_A1047.